Reading from the N-terminus, the 494-residue chain is tRNA (guanine(37)-N(1))-methyltransferase (494 aa).

Residues 1–32 (MRIRRILYFYGNLPNTYTANVLRRLAFSCWHT) constitute a mitochondrion transit peptide. Residues histidine 278, 316-317 (DL), 344-345 (DG), and asparagine 377 contribute to the S-adenosyl-L-methionine site. Residues 468 to 494 (DTGEPESKRPRTAEAFPLPHVQQSRNS) are disordered.

This sequence belongs to the class I-like SAM-binding methyltransferase superfamily. TRM5/TYW2 family. As to quaternary structure, monomer.

The protein resides in the mitochondrion matrix. Its subcellular location is the nucleus. It localises to the cytoplasm. It catalyses the reaction guanosine(37) in tRNA + S-adenosyl-L-methionine = N(1)-methylguanosine(37) in tRNA + S-adenosyl-L-homocysteine + H(+). Involved in mitochondrial tRNA methylation. Specifically methylates the N1 position of guanosine-37 in various tRNAs. Methylation is not dependent on the nature of the nucleoside 5' of the target nucleoside. This is the first step in the biosynthesis of wybutosine (yW), a modified base adjacent to the anticodon of tRNAs and required for accurate decoding. In Xenopus tropicalis (Western clawed frog), this protein is tRNA (guanine(37)-N(1))-methyltransferase (trmt5).